The following is a 402-amino-acid chain: uncharacterized protein (402 aa).

Residues 1 to 12 lie on the Cytoplasmic side of the membrane; that stretch reads MFQQLSASIRHN. Residues 13–33 form a helical membrane-spanning segment; it reads AHIIFLCISWYFISSLASQVT. The Extracellular portion of the chain corresponds to 34-50; that stretch reads KQVLTVCPLPLFLGEFQ. A helical membrane pass occupies residues 51 to 71; that stretch reads FIYTAVLAWFTCYIAYSFPGF. Topologically, residues 72-103 are cytoplasmic; it reads YRIFPNGTFPEYYIDDRETSRAARKESKLSSL. Residues 104–124 traverse the membrane as a helical segment; sequence IIPPSKPILQTVLPLGLFQFV. Over 125 to 134 the chain is Extracellular; sequence GKYFGHTATS. The helical transmembrane segment at 135–155 threads the bilayer; the sequence is LVPVSTVASIKTLSPMFILLL. The Cytoplasmic segment spans residues 156-165; sequence QKILKISTLK. Residues 166 to 186 form a helical membrane-spanning segment; the sequence is ITLTLIFSLCTLVLGVWIIVQ. Topologically, residues 187–206 are extracellular; sequence EDNRSPASSNELREFSKYGV. Residues 207-227 form a helical membrane-spanning segment; it reads ICAMISMFIFVLQNIYGKTVF. The Cytoplasmic segment spans residues 228-271; it reads TYRSQTDESQSNSGFSRQESPLPLYEKLDEKLVAKKKPKSYDKL. The helical transmembrane segment at 272-292 threads the bilayer; sequence TLMIYISLVGFCLSFGWFITL. Residues 293–353 are Extracellular-facing; that stretch reads EFPVLFRYFF…TYSIANLMKR (61 aa). The chain crosses the membrane as a helical span at residues 354 to 374; it reads FAIIAVSWVFIGRRITWLQVF. At 375-402 the chain is on the cytoplasmic side; it reads GLVLNTLGLFLYERCTSQSKIKAKIRPE.

The protein belongs to the TPT transporter family.

Its subcellular location is the membrane. This is an uncharacterized protein from Saccharomyces cerevisiae (strain ATCC 204508 / S288c) (Baker's yeast).